The following is a 299-amino-acid chain: GTPase Era (299 aa).

The region spanning 5–172 (KSGFVSIIGR…IDVLKSFLPE (168 aa)) is the Era-type G domain. A G1 region spans residues 13 to 20 (GRPNVGKS). 13–20 (GRPNVGKS) provides a ligand contact to GTP. Residues 39-43 (QTTRN) form a G2 region. Positions 60–63 (DTPG) are G3. GTP is bound by residues 60–64 (DTPGI) and 122–125 (NKID). The tract at residues 122–125 (NKID) is G4. The segment at 151–153 (ISA) is G5. Residues 203–280 (TSEEIPHAIG…YLELWVKVQR (78 aa)) form the KH type-2 domain.

The protein belongs to the TRAFAC class TrmE-Era-EngA-EngB-Septin-like GTPase superfamily. Era GTPase family. As to quaternary structure, monomer.

It localises to the cytoplasm. Its subcellular location is the cell membrane. In terms of biological role, an essential GTPase that binds both GDP and GTP, with rapid nucleotide exchange. Plays a role in 16S rRNA processing and 30S ribosomal subunit biogenesis and possibly also in cell cycle regulation and energy metabolism. The polypeptide is GTPase Era (Staphylococcus epidermidis (strain ATCC 35984 / DSM 28319 / BCRC 17069 / CCUG 31568 / BM 3577 / RP62A)).